A 203-amino-acid polypeptide reads, in one-letter code: 3-isopropylmalate dehydratase small subunit (203 aa).

Belongs to the LeuD family. LeuD type 1 subfamily. In terms of assembly, heterodimer of LeuC and LeuD.

It carries out the reaction (2R,3S)-3-isopropylmalate = (2S)-2-isopropylmalate. The protein operates within amino-acid biosynthesis; L-leucine biosynthesis; L-leucine from 3-methyl-2-oxobutanoate: step 2/4. Catalyzes the isomerization between 2-isopropylmalate and 3-isopropylmalate, via the formation of 2-isopropylmaleate. The protein is 3-isopropylmalate dehydratase small subunit of Rhodospirillum centenum (strain ATCC 51521 / SW).